Here is a 355-residue protein sequence, read N- to C-terminus: Uroporphyrinogen decarboxylase (355 aa).

Residues arginine 27–arginine 31, aspartate 77, tyrosine 154, threonine 209, and histidine 328 contribute to the substrate site.

Belongs to the uroporphyrinogen decarboxylase family. In terms of assembly, homodimer.

Its subcellular location is the cytoplasm. The enzyme catalyses uroporphyrinogen III + 4 H(+) = coproporphyrinogen III + 4 CO2. Its pathway is porphyrin-containing compound metabolism; protoporphyrin-IX biosynthesis; coproporphyrinogen-III from 5-aminolevulinate: step 4/4. Catalyzes the decarboxylation of four acetate groups of uroporphyrinogen-III to yield coproporphyrinogen-III. The sequence is that of Uroporphyrinogen decarboxylase from Aliivibrio salmonicida (strain LFI1238) (Vibrio salmonicida (strain LFI1238)).